The primary structure comprises 78 residues: Large ribosomal subunit protein bL31 (78 aa).

The protein belongs to the bacterial ribosomal protein bL31 family. Type A subfamily. As to quaternary structure, part of the 50S ribosomal subunit.

In terms of biological role, binds the 23S rRNA. This chain is Large ribosomal subunit protein bL31 (rpmE), found in Rickettsia typhi (strain ATCC VR-144 / Wilmington).